The chain runs to 462 residues: Argininosuccinate lyase (462 aa).

Belongs to the lyase 1 family. Argininosuccinate lyase subfamily.

It localises to the cytoplasm. It catalyses the reaction 2-(N(omega)-L-arginino)succinate = fumarate + L-arginine. The protein operates within amino-acid biosynthesis; L-arginine biosynthesis; L-arginine from L-ornithine and carbamoyl phosphate: step 3/3. The chain is Argininosuccinate lyase from Lachnoclostridium phytofermentans (strain ATCC 700394 / DSM 18823 / ISDg) (Clostridium phytofermentans).